Consider the following 94-residue polypeptide: Acylphosphatase (94 aa).

Residues 8–94 enclose the Acylphosphatase-like domain; it reads RLTAWVHGRV…REQITGFHER (87 aa). Catalysis depends on residues Arg23 and Asn41.

Belongs to the acylphosphatase family.

It carries out the reaction an acyl phosphate + H2O = a carboxylate + phosphate + H(+). The chain is Acylphosphatase (acyP) from Mycobacterium sp. (strain JLS).